Reading from the N-terminus, the 302-residue chain is Putative beta-glucosidase 17 (302 aa).

Residues 1–27 (MMAVAAATRIAVVVVAALAALAPGARG) form the signal peptide. A beta-D-glucoside is bound by residues Gln47, His149, and 194–195 (NE). Catalysis depends on Glu195, which acts as the Proton donor. A disulfide bridge connects residues Cys214 and Cys221. An N-linked (GlcNAc...) asparagine glycan is attached at Asn274.

It belongs to the glycosyl hydrolase 1 family.

The catalysed reaction is Hydrolysis of terminal, non-reducing beta-D-glucosyl residues with release of beta-D-glucose.. In Oryza sativa subsp. japonica (Rice), this protein is Putative beta-glucosidase 17 (BGLU17).